A 654-amino-acid chain; its full sequence is Chaperone protein HtpG (654 aa).

The interval 1–344 is a; substrate-binding; the sequence is MTVENAPQRE…SDDLPLNVSR (344 aa). A b region spans residues 345 to 556; that stretch reads ELLQDSQVVR…EGGSPAYLER (212 aa). Positions 557–654 are c; it reads LLQQRGRGAG…AQTPASATAS (98 aa).

The protein belongs to the heat shock protein 90 family. Homodimer.

The protein resides in the cytoplasm. Functionally, molecular chaperone. Has ATPase activity. This chain is Chaperone protein HtpG, found in Myxococcus xanthus (strain DK1622).